Consider the following 161-residue polypeptide: N5-carboxyaminoimidazole ribonucleotide mutase (161 aa).

The substrate site is built by serine 9, aspartate 12, and arginine 39.

The protein belongs to the AIR carboxylase family. Class I subfamily.

The enzyme catalyses 5-carboxyamino-1-(5-phospho-D-ribosyl)imidazole + H(+) = 5-amino-1-(5-phospho-D-ribosyl)imidazole-4-carboxylate. It participates in purine metabolism; IMP biosynthesis via de novo pathway; 5-amino-1-(5-phospho-D-ribosyl)imidazole-4-carboxylate from 5-amino-1-(5-phospho-D-ribosyl)imidazole (N5-CAIR route): step 2/2. Functionally, catalyzes the conversion of N5-carboxyaminoimidazole ribonucleotide (N5-CAIR) to 4-carboxy-5-aminoimidazole ribonucleotide (CAIR). This Vibrio cholerae serotype O1 (strain ATCC 39315 / El Tor Inaba N16961) protein is N5-carboxyaminoimidazole ribonucleotide mutase.